The sequence spans 372 residues: Ligninase B (372 aa).

An N-terminal signal peptide occupies residues 1-21 (MAFKQLFAAISLALSLSAANA). The propeptide occupies 22-28 (AAVIEKR). 4 disulfides stabilise this stretch: cysteine 31-cysteine 43, cysteine 42-cysteine 313, cysteine 62-cysteine 148, and cysteine 277-cysteine 345. Residue histidine 75 is the Proton acceptor of the active site. The Ca(2+) site is built by aspartate 76, glycine 94, aspartate 96, and serine 98. Histidine 204 contributes to the heme b binding site. Residues serine 205, aspartate 222, threonine 224, isoleucine 227, and aspartate 229 each coordinate Ca(2+). The N-linked (GlcNAc...) asparagine glycan is linked to asparagine 285. The span at 350-361 (FPTLTTLPGPET) shows a compositional bias: low complexity. The interval 350 to 372 (FPTLTTLPGPETSVQRIPPPPGA) is disordered.

Belongs to the peroxidase family. Ligninase subfamily. Heme b is required as a cofactor. Requires Ca(2+) as cofactor.

The enzyme catalyses 1-(3,4-dimethoxyphenyl)-2-(2-methoxyphenoxy)propane-1,3-diol + H2O2 = 3,4-dimethoxybenzaldehyde + guaiacol + glycolaldehyde + H2O. It catalyses the reaction 2 (3,4-dimethoxyphenyl)methanol + H2O2 = 2 (3,4-dimethoxyphenyl)methanol radical + 2 H2O. The protein operates within secondary metabolite metabolism; lignin degradation. Its function is as follows. Depolymerization of lignin. Catalyzes the C(alpha)-C(beta) cleavage of the propyl side chains of lignin. The chain is Ligninase B (LIPB) from Phanerodontia chrysosporium (White-rot fungus).